The sequence spans 330 residues: Carbonic anhydrase 1 (330 aa).

The segment at M1–A109 is chloroplast transit peptide-like.

The protein belongs to the beta-class carbonic anhydrase family. Homohexamer.

It is found in the cytoplasm. It carries out the reaction hydrogencarbonate + H(+) = CO2 + H2O. Its function is as follows. Reversible hydration of carbon dioxide. The polypeptide is Carbonic anhydrase 1 (Flaveria linearis (Narrowleaf yellowtops)).